The following is a 427-amino-acid chain: Glutamate-1-semialdehyde 2,1-aminomutase (427 aa).

At Lys-264 the chain carries N6-(pyridoxal phosphate)lysine.

Belongs to the class-III pyridoxal-phosphate-dependent aminotransferase family. HemL subfamily. As to quaternary structure, homodimer. The cofactor is pyridoxal 5'-phosphate.

It is found in the cytoplasm. The enzyme catalyses (S)-4-amino-5-oxopentanoate = 5-aminolevulinate. The protein operates within porphyrin-containing compound metabolism; protoporphyrin-IX biosynthesis; 5-aminolevulinate from L-glutamyl-tRNA(Glu): step 2/2. The protein is Glutamate-1-semialdehyde 2,1-aminomutase of Clostridium botulinum (strain Alaska E43 / Type E3).